We begin with the raw amino-acid sequence, 274 residues long: MTWADEVLAGHPFVVAHRGASAARPEHTLAAYDLALKEGADGVECDVRLTRDGHLVCVHDRRLDRTSTGAGLVSTMTLAQLRELEYGAWHDSWRPDGSHGDTSLLTLDALVSLVLDWHRPVKIFVETKHPVRYGSLVENKLLALLHRFGIAAPASADRSRAVVMSFSAAAVWRIRRAAPLLPTVLLGKTPRYLTSSAATAVGATAVGPSLPALKEYPQLVDRSAAQGRAVYCWNVDEYEDIDFCREVGVAWIGTHHPGRTKAWLEDGRANGTTR.

One can recognise a GP-PDE domain in the interval 12–264; that stretch reads PFVVAHRGAS…HHPGRTKAWL (253 aa). His-17 acts as the Proton acceptor in catalysis. Positions 44 and 46 each coordinate Ca(2+). His-59 functions as the Proton donor in the catalytic mechanism. Glu-126 provides a ligand contact to Ca(2+).

The protein belongs to the glycerophosphoryl diester phosphodiesterase family. Ca(2+) serves as cofactor.

The catalysed reaction is a sn-glycero-3-phosphodiester + H2O = an alcohol + sn-glycerol 3-phosphate + H(+). Glycerophosphodiester phosphodiesterase hydrolyzes glycerophosphodiesters into glycerol-3-phosphate (G3P) and the corresponding alcohol. This is Probable glycerophosphodiester phosphodiesterase 1 (glpQ1) from Mycobacterium tuberculosis (strain CDC 1551 / Oshkosh).